Reading from the N-terminus, the 312-residue chain is Putative electron transfer flavoprotein subunit YdiR (312 aa).

Residue 254 to 282 coordinates FAD; it reads LYLTLGISGQIQHMVGGNGAKVIVAINKD.

Belongs to the ETF alpha-subunit/FixB family. In terms of assembly, ydiR and YdiQ form a heterodimer.

May play a role in a redox process. The polypeptide is Putative electron transfer flavoprotein subunit YdiR (ydiR) (Escherichia coli (strain K12)).